A 39-amino-acid chain; its full sequence is Photosystem II reaction center protein X (39 aa).

The chain crosses the membrane as a helical span at residues 10 to 30 (WSLVLGAAIVLIPATIGLIFI).

Belongs to the PsbX family. Type 1 subfamily. As to quaternary structure, PSII is composed of 1 copy each of membrane proteins PsbA, PsbB, PsbC, PsbD, PsbE, PsbF, PsbH, PsbI, PsbJ, PsbK, PsbL, PsbM, PsbT, PsbX, PsbY, PsbZ, Psb30/Ycf12, peripheral proteins PsbO, CyanoQ (PsbQ), PsbU, PsbV and a large number of cofactors. It forms dimeric complexes.

It is found in the cellular thylakoid membrane. Its function is as follows. Involved in the binding and/or turnover of quinones at the Q(B) site of photosystem II (PSII). PSII is a light-driven water plastoquinone oxidoreductase, using light energy to abstract electrons from H(2)O, generating a proton gradient subsequently used for ATP formation. This chain is Photosystem II reaction center protein X, found in Microcystis aeruginosa (strain NIES-843 / IAM M-2473).